Here is a 428-residue protein sequence, read N- to C-terminus: 3-phosphoshikimate 1-carboxyvinyltransferase (428 aa).

Residues Lys-22, Ser-23, and Arg-27 each coordinate 3-phosphoshikimate. Residue Lys-22 participates in phosphoenolpyruvate binding. Phosphoenolpyruvate is bound by residues Gly-94 and Arg-122. Positions 169, 170, 171, 197, 315, and 342 each coordinate 3-phosphoshikimate. Phosphoenolpyruvate is bound at residue Gln-171. The active-site Proton acceptor is Asp-315. The phosphoenolpyruvate site is built by Arg-346, Arg-389, and Lys-414.

The protein belongs to the EPSP synthase family. In terms of assembly, monomer.

Its subcellular location is the cytoplasm. It catalyses the reaction 3-phosphoshikimate + phosphoenolpyruvate = 5-O-(1-carboxyvinyl)-3-phosphoshikimate + phosphate. Its pathway is metabolic intermediate biosynthesis; chorismate biosynthesis; chorismate from D-erythrose 4-phosphate and phosphoenolpyruvate: step 6/7. Its function is as follows. Catalyzes the transfer of the enolpyruvyl moiety of phosphoenolpyruvate (PEP) to the 5-hydroxyl of shikimate-3-phosphate (S3P) to produce enolpyruvyl shikimate-3-phosphate and inorganic phosphate. This chain is 3-phosphoshikimate 1-carboxyvinyltransferase, found in Cellvibrio japonicus (strain Ueda107) (Pseudomonas fluorescens subsp. cellulosa).